Consider the following 365-residue polypeptide: Mannose-1-phosphate guanylyltransferase catalytic subunit beta (365 aa).

Residues Lys2 to Pro221 are substrate-binding domain. Asp109 is a GDP-alpha-D-mannose binding site. A Mg(2+)-binding site is contributed by Asp109. Lys161 is an active-site residue. Asp217 provides a ligand contact to GDP-alpha-D-mannose. Asp217 is a binding site for Mg(2+). Residues Glu244–Met365 are hexapeptide repeat domain.

This sequence belongs to the transferase hexapeptide repeat family. In terms of assembly, component of the GMPPA-GMPPB mannose-1-phosphate guanylyltransferase complex composed of 4 GMPPA subunits and 8 tag-335/GMPPB subunits; the complex is organized into three layers, a central layer made up of 2 GMPPA dimers sandwiched between two layers each made up of 2 tag-335/GMPPB dimers. Catalytic activity of tag-335/GMPPB is reduced when part of the complex and binding of GDP-alpha-D-Mannose by GMPPA induces allosteric feedback inhibition of tag-335/GMPPB. Mg(2+) is required as a cofactor.

It catalyses the reaction alpha-D-mannose 1-phosphate + GTP + H(+) = GDP-alpha-D-mannose + diphosphate. Its pathway is nucleotide-sugar biosynthesis; GDP-alpha-D-mannose biosynthesis; GDP-alpha-D-mannose from alpha-D-mannose 1-phosphate (GTP route): step 1/1. Its activity is regulated as follows. Enzyme activity is reduced by incorporation into the GMPPA-GMPPB mannose-1-phosphate guanylyltransferase complex. Allosterically inhibited, when part of the GMPPA-GMPPB complex, by GDP-alpha-D-mannose binding to GMPPA. Catalytic subunit of the GMPPA-GMPPB mannose-1-phosphate guanylyltransferase complex. Catalyzes the formation of GDP-mannose, an essential precursor of glycan moieties of glycoproteins and glycolipids. Can catalyze the reverse reaction in vitro. Together with GMPPA regulates GDP-alpha-D-mannose levels. The polypeptide is Mannose-1-phosphate guanylyltransferase catalytic subunit beta (tag-335) (Caenorhabditis elegans).